Consider the following 914-residue polypeptide: Golgin candidate 6 (914 aa).

Coiled coils occupy residues 723–837 (IEKQ…SLKG) and 863–901 (EDEL…LEDI). S911 bears the Phosphoserine mark.

The protein resides in the golgi apparatus. The protein localises to the golgi stack. Golgi matrix protein playing a role in tethering of vesicles to Golgi membranes and in maintaining the overall structure of the Golgi apparatus. Functions in the anterograde transport of storage protein precursors from the endoplasmic reticulum (ER) to the Golgi complex. This chain is Golgin candidate 6 (GC6), found in Arabidopsis thaliana (Mouse-ear cress).